Consider the following 512-residue polypeptide: MDIISGQALLLLFCFILSCFLIFTTTRSGRISRGATALPPGPPRLPIIGNIHLVGKHPHRSFAELSKTYGPVMSLKLGSLNTVVIASPEAAREVLRTHDQILSARSPTNAVRSINHQDASLVWLPSSSARWRLLRRLSVTQLLSPQRIEATKALRMNKVKELVSFISESSDREESVDISRVAFITTLNIISNILFSVDLGSYNAKASINGVQDTVISVMDAAGTPDAANYFPFLRFLDLQGNVKTFKVCTERLVRVFRGFIDAKIAEKSSQNNPKDVSKNDFVDNLLDYKGDESELSISDIEHLLLDMFTAGTDTSSSTLEWAMTELLKNPKTMAKAQAEIDCVIGQNGIVEESDISKLPYLQAVVKETFRLHTPVPLLIPRKAESDAEILGFMVLKDTQVLVNVWAIGRDPSVWDNPSQFEPERFLGKDMDVRGRDYELTPFGAGRRICPGMPLAMKTVSLMLASLLYSFDWKLPKGVLSEDLDMDETFGLTLHKTNPLHAVPVKKRANIN.

A helical transmembrane segment spans residues 3-23 (IISGQALLLLFCFILSCFLIF). Position 450 (Cys450) interacts with heme.

This sequence belongs to the cytochrome P450 family. Heme is required as a cofactor.

Its subcellular location is the membrane. This is Cytochrome P450 76C1 (CYP76C1) from Arabidopsis thaliana (Mouse-ear cress).